The sequence spans 274 residues: 2,3,4,5-tetrahydropyridine-2,6-dicarboxylate N-succinyltransferase (274 aa).

Positions 104 and 141 each coordinate substrate.

This sequence belongs to the transferase hexapeptide repeat family. In terms of assembly, homotrimer.

The protein localises to the cytoplasm. It catalyses the reaction (S)-2,3,4,5-tetrahydrodipicolinate + succinyl-CoA + H2O = (S)-2-succinylamino-6-oxoheptanedioate + CoA. It participates in amino-acid biosynthesis; L-lysine biosynthesis via DAP pathway; LL-2,6-diaminopimelate from (S)-tetrahydrodipicolinate (succinylase route): step 1/3. The protein is 2,3,4,5-tetrahydropyridine-2,6-dicarboxylate N-succinyltransferase of Shewanella pealeana (strain ATCC 700345 / ANG-SQ1).